Consider the following 88-residue polypeptide: Small ribosomal subunit protein bS20 (88 aa).

The disordered stretch occupies residues 1–25 (MANTPSAKKAARKIERRTAVNRARR).

The protein belongs to the bacterial ribosomal protein bS20 family.

Its function is as follows. Binds directly to 16S ribosomal RNA. This Azorhizobium caulinodans (strain ATCC 43989 / DSM 5975 / JCM 20966 / LMG 6465 / NBRC 14845 / NCIMB 13405 / ORS 571) protein is Small ribosomal subunit protein bS20.